We begin with the raw amino-acid sequence, 926 residues long: Ubiquitin carboxyl-terminal hydrolase 4 (926 aa).

The region spanning 205–328 (SQMEILLIDI…WLKSNYGSQV (124 aa)) is the Rhodanese domain. Ser443 carries the phosphoserine modification. The region spanning 562-923 (VGLENLGNSC…NAYVLFYHRV (362 aa)) is the USP domain. Catalysis depends on Cys571, which acts as the Nucleophile. His880 functions as the Proton acceptor in the catalytic mechanism.

This sequence belongs to the peptidase C19 family. In terms of assembly, interacts with BRO1, RFU1 and VPS32. Associates with the 26S proteasome.

The protein localises to the cytoplasm. The protein resides in the late endosome membrane. The enzyme catalyses Thiol-dependent hydrolysis of ester, thioester, amide, peptide and isopeptide bonds formed by the C-terminal Gly of ubiquitin (a 76-residue protein attached to proteins as an intracellular targeting signal).. Its activity is regulated as follows. RFU1 is an inhibitor of deubiquitination activity. Functionally, ubiquitin thioesterase that acts at the late endosome/prevacuolar compartment to recover ubiquitin from ubiquitinated membrane proteins en route to the vacuole. Also removes ubiquitin from soluble proteins targeted to proteasomes. Is essential to maintain a normal level of free ubiquitin. Involved in the ammonium-induced down-regulation of the GAP1 permease and the UME3 destruction in response to oxidative stress. Has a role in the RAD9 checkpoint response to TOP1 poisons. Required for promoting coordination of DNA replication and avoids DNA overreplication. This Saccharomyces cerevisiae (strain YJM789) (Baker's yeast) protein is Ubiquitin carboxyl-terminal hydrolase 4 (DOA4).